The primary structure comprises 295 residues: GTPase Era (295 aa).

The Era-type G domain occupies 7–176; it reads KTISVCIIGR…IKSKAKVSPW (170 aa). The segment at 15–22 is G1; sequence GRPNSGKS. Residue 15–22 coordinates GTP; that stretch reads GRPNSGKS. The tract at residues 41–45 is G2; the sequence is QTTRS. Positions 62-65 are G3; it reads DTPG. GTP-binding positions include 62–66 and 124–127; these read DTPGI and NKID. A G4 region spans residues 124-127; that stretch reads NKID. Residues 152–154 are G5; it reads ISA. The KH type-2 domain occupies 204–281; sequence LQQELPYKLT…HLFLFVKVHA (78 aa).

It belongs to the TRAFAC class TrmE-Era-EngA-EngB-Septin-like GTPase superfamily. Era GTPase family. As to quaternary structure, monomer.

Its subcellular location is the cytoplasm. The protein localises to the cell inner membrane. In terms of biological role, an essential GTPase that binds both GDP and GTP, with rapid nucleotide exchange. Plays a role in 16S rRNA processing and 30S ribosomal subunit biogenesis and possibly also in cell cycle regulation and energy metabolism. The sequence is that of GTPase Era from Rickettsia prowazekii (strain Madrid E).